Here is a 154-residue protein sequence, read N- to C-terminus: Troponin C, isoallergen Bla g 6.0301 (154 aa).

EF-hand domains are found at residues 11 to 46 (EQIS…MGQP), 47 to 82 (FNRR…FIIE), 87 to 122 (AMEK…LDEQ), and 123 to 154 (LTSD…MMTG). D60, D62, S64, R66, and E71 together coordinate Ca(2+). The Ca(2+) site is built by D136, D138, S140, T142, and E147.

This sequence belongs to the troponin C family.

Its function is as follows. Troponin is the central regulatory protein of striated muscle contraction. It consists of three components: Troponin-I (Tn-I) which is the inhibitor of actomyosin ATPase, Troponin-T (Tn-T) which contains the binding site for tropomyosin and Troponin-C (Tn-C). The binding of calcium to Tn-C abolishes the inhibitory action of Tn on actin filaments. This chain is Troponin C, isoallergen Bla g 6.0301, found in Blattella germanica (German cockroach).